The primary structure comprises 125 residues: E4-ORF1 (125 aa).

The PDZ-binding motif lies at 122-125; that stretch reads ATLV.

This sequence belongs to the dUTPase family. In terms of assembly, binds to human MPDZ.

The protein localises to the host cytoplasm. It catalyses the reaction dUTP + H2O = dUMP + diphosphate + H(+). In terms of biological role, plays a key role in virus oncogenecity in animals. Binds and sequesters human MUPP1/MPDZ protein in the cytoplasm, preventing it from playing a role in cellular proliferation regulation. Induces cell transformation, probably by inactivating MPDZ protein. The sequence is that of E4-ORF1 (E4) from Homo sapiens (Human).